A 97-amino-acid chain; its full sequence is MSESLSWMQTGDTLALSGELDQDVLLPLWEMREEAVKGITCIDLSRVSRVDTGGLALLLHLIDLAKKQGNNVTLQGVNDKVYTLAKLYNLPADVLPR.

The STAS domain occupies 1–97 (MSESLSWMQT…YNLPADVLPR (97 aa)).

As to quaternary structure, the complex is composed of two ATP-binding proteins (MlaF), two transmembrane proteins (MlaE), two cytoplasmic solute-binding proteins (MlaB) and six periplasmic solute-binding proteins (MlaD).

It localises to the cytoplasm. Part of the ABC transporter complex MlaFEDB, which is involved in a phospholipid transport pathway that maintains lipid asymmetry in the outer membrane by retrograde trafficking of phospholipids from the outer membrane to the inner membrane. MlaB plays critical roles in both the assembly and activity of the complex. May act by modulating MlaF structure and stability. This is Intermembrane phospholipid transport system binding protein MlaB from Escherichia coli (strain K12).